The chain runs to 327 residues: Prenyl transferase janC (327 aa).

The chain crosses the membrane as a helical span at residues 3-23 (FPGAGPILGAIAVSSCLYFLF). Isopentenyl diphosphate-binding residues include Lys-63 and His-96. Residues Asp-103 and Asp-107 each coordinate Mg(2+). Residues Arg-112 and Lys-196 each contribute to the dimethylallyl diphosphate site. Asn-211 is a glycosylation site (N-linked (GlcNAc...) asparagine).

Belongs to the FPP/GGPP synthase family.

Its subcellular location is the membrane. Its pathway is secondary metabolite biosynthesis. Its function is as follows. Prenyl transferase; part of the gene cluster that mediates the biosynthesis of the indole diterpenes janthitremanes such as shearinine K or shearinine A. The geranylgeranyl diphosphate (GGPP) synthase janG catalyzes the first step in janthitremane biosynthesis via conversion of farnesyl pyrophosphate and isopentyl pyrophosphate into geranylgeranyl pyrophosphate (GGPP). Condensation of indole-3-glycerol phosphate with GGPP by the prenyl transferase janC then forms 3-geranylgeranylindole (3-GGI). Epoxidation by the FAD-dependent monooxygenase janM leads to a epoxidized-GGI that is substrate of the terpene cyclase janB for cyclization to yield paspaline. Paspaline is subsequently converted to 13-desoxypaspaline by the cytochrome P450 monooxygenase janP, via beta-PC-M6 in a series of alpha-face oxidations. The cytochrome P450 monooxygenase janQ is proposed to carry out sequential beta-face oxidation steps at C-7 and C-13 of 13-desoxypaspaline to form paspalicine and paspalinine respectively. The indole diterpene prenyltransferase janD may then convert paspalinine into shearinine K which is substrate of janO and/or additional enzymes for oxidation and cyclization to generate shearinine A. The chain is Prenyl transferase janC from Penicillium janthinellum (Penicillium vitale).